The primary structure comprises 317 residues: tRNA(Ile)-lysidine synthase (317 aa).

30 to 35 lines the ATP pocket; that stretch reads SGGSDS.

Belongs to the tRNA(Ile)-lysidine synthase family.

The protein localises to the cytoplasm. It catalyses the reaction cytidine(34) in tRNA(Ile2) + L-lysine + ATP = lysidine(34) in tRNA(Ile2) + AMP + diphosphate + H(+). Ligates lysine onto the cytidine present at position 34 of the AUA codon-specific tRNA(Ile) that contains the anticodon CAU, in an ATP-dependent manner. Cytidine is converted to lysidine, thus changing the amino acid specificity of the tRNA from methionine to isoleucine. The protein is tRNA(Ile)-lysidine synthase of Chlamydia abortus (strain DSM 27085 / S26/3) (Chlamydophila abortus).